Here is a 96-residue protein sequence, read N- to C-terminus: Small ribosomal subunit protein bS6 (96 aa).

The protein belongs to the bacterial ribosomal protein bS6 family.

Its function is as follows. Binds together with bS18 to 16S ribosomal RNA. This is Small ribosomal subunit protein bS6 from Corynebacterium aurimucosum (strain ATCC 700975 / DSM 44827 / CIP 107346 / CN-1) (Corynebacterium nigricans).